Consider the following 185-residue polypeptide: FK506-binding protein 2 (185 aa).

Residues 1–20 (MQGLLLSLSLLASAAVGVLA) form the signal peptide. A PPIase FKBP-type domain is found at 41 to 129 (GDKINVHYKG…VFETELVGIE (89 aa)). The short motif at 182 to 185 (HNEL) is the Prevents secretion from ER element.

This sequence belongs to the FKBP-type PPIase family. FKBP2 subfamily.

Its subcellular location is the endoplasmic reticulum. The enzyme catalyses [protein]-peptidylproline (omega=180) = [protein]-peptidylproline (omega=0). With respect to regulation, inhibited by both FK506 and rapamycin. Functionally, PPIases accelerate the folding of proteins. It catalyzes the cis-trans isomerization of proline imidic peptide bonds in oligopeptides. The chain is FK506-binding protein 2 (FPR2) from Podospora anserina (Pleurage anserina).